Consider the following 372-residue polypeptide: NAD(P)H-quinone oxidoreductase subunit 1 (372 aa).

The next 8 helical transmembrane spans lie at leucine 27 to valine 47, leucine 97 to isoleucine 117, valine 128 to methionine 148, leucine 176 to valine 196, phenylalanine 204 to leucine 224, leucine 270 to alanine 290, serine 308 to leucine 328, and isoleucine 351 to glycine 371.

Belongs to the complex I subunit 1 family. In terms of assembly, NDH-1 is composed of at least 11 different subunits.

It localises to the cellular thylakoid membrane. It catalyses the reaction a plastoquinone + NADH + (n+1) H(+)(in) = a plastoquinol + NAD(+) + n H(+)(out). The enzyme catalyses a plastoquinone + NADPH + (n+1) H(+)(in) = a plastoquinol + NADP(+) + n H(+)(out). Its function is as follows. NDH-1 shuttles electrons from an unknown electron donor, via FMN and iron-sulfur (Fe-S) centers, to quinones in the respiratory and/or the photosynthetic chain. The immediate electron acceptor for the enzyme in this species is believed to be plastoquinone. Couples the redox reaction to proton translocation, and thus conserves the redox energy in a proton gradient. The polypeptide is NAD(P)H-quinone oxidoreductase subunit 1 (Prochlorococcus marinus (strain SARG / CCMP1375 / SS120)).